Here is a 355-residue protein sequence, read N- to C-terminus: 3-dehydroquinate synthase (355 aa).

NAD(+) contacts are provided by residues 69–74 (DGEQHK), 103–107 (GVIGD), 127–128 (TT), K140, K149, and 167–170 (TLQT). Residues E182, H245, and H262 each contribute to the Zn(2+) site.

The protein belongs to the sugar phosphate cyclases superfamily. Dehydroquinate synthase family. Requires Co(2+) as cofactor. Zn(2+) serves as cofactor. It depends on NAD(+) as a cofactor.

It localises to the cytoplasm. The enzyme catalyses 7-phospho-2-dehydro-3-deoxy-D-arabino-heptonate = 3-dehydroquinate + phosphate. The protein operates within metabolic intermediate biosynthesis; chorismate biosynthesis; chorismate from D-erythrose 4-phosphate and phosphoenolpyruvate: step 2/7. Functionally, catalyzes the conversion of 3-deoxy-D-arabino-heptulosonate 7-phosphate (DAHP) to dehydroquinate (DHQ). This chain is 3-dehydroquinate synthase, found in Pseudoalteromonas atlantica (strain T6c / ATCC BAA-1087).